A 357-amino-acid chain; its full sequence is UDP-N-acetylglucosamine--N-acetylmuramyl-(pentapeptide) pyrophosphoryl-undecaprenol N-acetylglucosamine transferase (357 aa).

UDP-N-acetyl-alpha-D-glucosamine-binding positions include 12–14 (TAG), R166, S196, and Q291.

It belongs to the glycosyltransferase 28 family. MurG subfamily.

Its subcellular location is the cell membrane. The enzyme catalyses di-trans,octa-cis-undecaprenyl diphospho-N-acetyl-alpha-D-muramoyl-L-alanyl-D-glutamyl-meso-2,6-diaminopimeloyl-D-alanyl-D-alanine + UDP-N-acetyl-alpha-D-glucosamine = di-trans,octa-cis-undecaprenyl diphospho-[N-acetyl-alpha-D-glucosaminyl-(1-&gt;4)]-N-acetyl-alpha-D-muramoyl-L-alanyl-D-glutamyl-meso-2,6-diaminopimeloyl-D-alanyl-D-alanine + UDP + H(+). It functions in the pathway cell wall biogenesis; peptidoglycan biosynthesis. Cell wall formation. Catalyzes the transfer of a GlcNAc subunit on undecaprenyl-pyrophosphoryl-MurNAc-pentapeptide (lipid intermediate I) to form undecaprenyl-pyrophosphoryl-MurNAc-(pentapeptide)GlcNAc (lipid intermediate II). This is UDP-N-acetylglucosamine--N-acetylmuramyl-(pentapeptide) pyrophosphoryl-undecaprenol N-acetylglucosamine transferase from Geobacillus kaustophilus (strain HTA426).